Here is a 205-residue protein sequence, read N- to C-terminus: Probable NAD(P)H dehydrogenase (quinone) FQR1-like 1 (205 aa).

One can recognise a Flavodoxin-like domain in the interval 5-192; it reads VYIVYYSMYG…GQAFHQGKYI (188 aa). FMN contacts are provided by residues 11 to 15, 112 to 165, and histidine 136; these read SMYGH and IFYS…SPYG. Residue tyrosine 13 participates in NAD(+) binding.

It belongs to the WrbA family. It depends on FMN as a cofactor.

The protein resides in the cell membrane. It catalyses the reaction a quinone + NADH + H(+) = a quinol + NAD(+). The catalysed reaction is a quinone + NADPH + H(+) = a quinol + NADP(+). In terms of biological role, catalyzes the transfer of electrons from NADH and NADPH to reduce quinone to the hydroquinone state. This is Probable NAD(P)H dehydrogenase (quinone) FQR1-like 1 from Arabidopsis thaliana (Mouse-ear cress).